Consider the following 522-residue polypeptide: Secreted RxLR effector protein 105 (522 aa).

A signal peptide spans 1 to 21 (MRGPCSVITALLVVASSQIAA). The short motif at 48-63 (RYLRGSQHVLDSNEER) is the RxLR-dEER element.

Belongs to the RxLR effector family.

It is found in the secreted. Its subcellular location is the host nucleus. The protein localises to the host cytoplasm. Functionally, secreted effector that dos not suppress the host cell death induced by cell death-inducing proteins. This is Secreted RxLR effector protein 105 from Plasmopara viticola (Downy mildew of grapevine).